A 299-amino-acid polypeptide reads, in one-letter code: 21S rRNA pseudouridine(2819) synthase (299 aa).

The active site involves aspartate 106.

It belongs to the pseudouridine synthase RluA family.

Its subcellular location is the mitochondrion. It carries out the reaction uridine(2819) in 21S rRNA = pseudouridine(2819) in 21S rRNA. Pseudouridylate synthase responsible for the pseudouridine-2819 formation in mitochondrial 21S rRNA. May modulate the efficiency or the fidelity of the mitochondrial translation machinery. This Kluyveromyces lactis (strain ATCC 8585 / CBS 2359 / DSM 70799 / NBRC 1267 / NRRL Y-1140 / WM37) (Yeast) protein is 21S rRNA pseudouridine(2819) synthase (PUS5).